Here is a 139-residue protein sequence, read N- to C-terminus: ATP synthase epsilon chain (139 aa).

This sequence belongs to the ATPase epsilon chain family. F-type ATPases have 2 components, CF(1) - the catalytic core - and CF(0) - the membrane proton channel. CF(1) has five subunits: alpha(3), beta(3), gamma(1), delta(1), epsilon(1). CF(0) has three main subunits: a, b and c.

It is found in the cell inner membrane. Functionally, produces ATP from ADP in the presence of a proton gradient across the membrane. The sequence is that of ATP synthase epsilon chain from Salmonella typhimurium (strain LT2 / SGSC1412 / ATCC 700720).